Reading from the N-terminus, the 100-residue chain is Ferredoxin (100 aa).

The propeptide occupies 1-8 (MLSQVCRF). The 2Fe-2S ferredoxin-type domain maps to 9-100 (GTITAVKGGV…GENDGAVFEL (92 aa)). Cys46, Cys52, Cys55, and Cys85 together coordinate [2Fe-2S] cluster.

The cofactor is [2Fe-2S] cluster.

The protein resides in the hydrogenosome. In terms of biological role, ferredoxins are iron-sulfur proteins that transfer electrons in a wide variety of metabolic reactions. It links pyruvate:ferredoxin oxidoreductase to hydrogenase. The protein is Ferredoxin of Trichomonas vaginalis.